The sequence spans 232 residues: Large ribosomal subunit protein uL1 (232 aa).

Belongs to the universal ribosomal protein uL1 family. As to quaternary structure, part of the 50S ribosomal subunit.

Binds directly to 23S rRNA. The L1 stalk is quite mobile in the ribosome, and is involved in E site tRNA release. In terms of biological role, protein L1 is also a translational repressor protein, it controls the translation of the L11 operon by binding to its mRNA. In Paraburkholderia phymatum (strain DSM 17167 / CIP 108236 / LMG 21445 / STM815) (Burkholderia phymatum), this protein is Large ribosomal subunit protein uL1.